The chain runs to 254 residues: Imidazole glycerol phosphate synthase subunit HisF (254 aa).

Active-site residues include Asp11 and Asp130.

The protein belongs to the HisA/HisF family. In terms of assembly, heterodimer of HisH and HisF.

The protein resides in the cytoplasm. It catalyses the reaction 5-[(5-phospho-1-deoxy-D-ribulos-1-ylimino)methylamino]-1-(5-phospho-beta-D-ribosyl)imidazole-4-carboxamide + L-glutamine = D-erythro-1-(imidazol-4-yl)glycerol 3-phosphate + 5-amino-1-(5-phospho-beta-D-ribosyl)imidazole-4-carboxamide + L-glutamate + H(+). It participates in amino-acid biosynthesis; L-histidine biosynthesis; L-histidine from 5-phospho-alpha-D-ribose 1-diphosphate: step 5/9. Functionally, IGPS catalyzes the conversion of PRFAR and glutamine to IGP, AICAR and glutamate. The HisF subunit catalyzes the cyclization activity that produces IGP and AICAR from PRFAR using the ammonia provided by the HisH subunit. The polypeptide is Imidazole glycerol phosphate synthase subunit HisF (Laribacter hongkongensis (strain HLHK9)).